The chain runs to 64 residues: Disintegrin VA6 (64 aa).

A Disintegrin domain is found at 1–64 (NSANPCCDPV…SDCPRNPYKS (64 aa)). Intrachain disulfides connect cysteine 6–cysteine 29, cysteine 20–cysteine 26, cysteine 25–cysteine 50, and cysteine 38–cysteine 57. The Cell attachment site motif lies at 42-44 (RGD).

It belongs to the venom metalloproteinase (M12B) family. P-II subfamily. P-IId sub-subfamily. Homodimer; disulfide-linked. As to expression, expressed by the venom gland.

It is found in the secreted. Its function is as follows. Poor inhibitor of platelet aggregation. The disintegrin inhibits the adhesion of cells expressing the RGD-dependent integrin alpha-5/beta-1 (ITGA5/ITGB1) to immobilized fibronectin. Inhibition on alpha-IIb/beta-3 (ITGA2B/ITGB3) is low, and there is no inhibition on alpha-1/beta-1 (ITGA1/ITGB1), alpha-2/beta-1 (ITGA2/ITGB1) and alpha-6/beta-1 (ITGA6/ITGB1). The chain is Disintegrin VA6 from Vipera ammodytes ammodytes (Western sand viper).